A 431-amino-acid chain; its full sequence is Argininosuccinate lyase (431 aa).

It belongs to the lyase 1 family. Argininosuccinate lyase subfamily.

The protein localises to the cytoplasm. The catalysed reaction is 2-(N(omega)-L-arginino)succinate = fumarate + L-arginine. Its pathway is amino-acid biosynthesis; L-arginine biosynthesis; L-arginine from L-ornithine and carbamoyl phosphate: step 3/3. The polypeptide is Argininosuccinate lyase (Xanthomonas campestris pv. campestris (strain ATCC 33913 / DSM 3586 / NCPPB 528 / LMG 568 / P 25)).